We begin with the raw amino-acid sequence, 293 residues long: ATP synthase subunit a (293 aa).

Helical transmembrane passes span 40-60 (DSLFWSGLMGLIVIFCLWLAA), 98-118 (FVAPLALTVFLWIILMNALDL), 151-171 (DLNVPMGMSLGVLLLMFYYGI), 188-208 (FHAHGLAALVLAPFNLLLNLI), 225-245 (MFAGELIFMLIALLGGAWTGF), and 264-284 (AIFHILIVLLQAFIFMMLTLV).

It belongs to the ATPase A chain family. As to quaternary structure, F-type ATPases have 2 components, CF(1) - the catalytic core - and CF(0) - the membrane proton channel. CF(1) has five subunits: alpha(3), beta(3), gamma(1), delta(1), epsilon(1). CF(0) has three main subunits: a(1), b(2) and c(9-12). The alpha and beta chains form an alternating ring which encloses part of the gamma chain. CF(1) is attached to CF(0) by a central stalk formed by the gamma and epsilon chains, while a peripheral stalk is formed by the delta and b chains.

Its subcellular location is the cell inner membrane. Key component of the proton channel; it plays a direct role in the translocation of protons across the membrane. This chain is ATP synthase subunit a, found in Bordetella avium (strain 197N).